The following is a 195-amino-acid chain: CDP-diacylglycerol--glycerol-3-phosphate 3-phosphatidyltransferase (195 aa).

Helical transmembrane passes span 7-24 (ITVL…LFYL), 60-81 (FGAF…VLLV), 134-150 (MLAL…FTFW), and 157-173 (FLLI…LQYL).

This sequence belongs to the CDP-alcohol phosphatidyltransferase class-I family.

It is found in the cell membrane. It carries out the reaction a CDP-1,2-diacyl-sn-glycerol + sn-glycerol 3-phosphate = a 1,2-diacyl-sn-glycero-3-phospho-(1'-sn-glycero-3'-phosphate) + CMP + H(+). The protein operates within phospholipid metabolism; phosphatidylglycerol biosynthesis; phosphatidylglycerol from CDP-diacylglycerol: step 1/2. Its function is as follows. This protein catalyzes the committed step to the synthesis of the acidic phospholipids. The sequence is that of CDP-diacylglycerol--glycerol-3-phosphate 3-phosphatidyltransferase (pgsA) from Pseudomonas fluorescens.